Here is a 1025-residue protein sequence, read N- to C-terminus: Multidrug resistance protein MdtC (1025 aa).

12 consecutive transmembrane segments (helical) span residues 3–23, 333–353, 360–380, 387–407, 431–451, 463–483, 528–548, 853–873, 875–895, 897–917, 953–973, and 984–1004; these read FFAL…AITL, EVEQ…FLFL, IIPA…MYLC, LSLM…IVVL, VGFT…PLLL, FAVT…TLTP, LVGV…ISIP, VILI…LYES, VHPL…LLAL, LFNA…IGIV, PIMM…LSGG, and ITIV…TPVV.

Belongs to the resistance-nodulation-cell division (RND) (TC 2.A.6) family. MdtC subfamily. Part of a tripartite efflux system composed of MdtA, MdtB and MdtC. MdtC forms a heteromultimer with MdtB.

The protein resides in the cell inner membrane. Its function is as follows. The MdtABC tripartite complex confers resistance against novobiocin and deoxycholate. This is Multidrug resistance protein MdtC from Escherichia coli O127:H6 (strain E2348/69 / EPEC).